We begin with the raw amino-acid sequence, 666 residues long: MSSPFVPIITADIDWRDDLPYSLQFDDIYYSAEGGINQSLYVFVEGNNLINRWQQLPTNESNVFTIAETGFGTGMNFLLTWKLWEKFAPQNARLHYISCDKHPLKKDDLIKCLQKWPELSVQTEKLIEHYPVLTPGYHHLAFSNNRITLTLMLGDVLECYEQLLFCGDINLEHQLRESYVNAWYLDGFSPSKNQSMWSDNLFTVIAMLSKESTTVATYSASSIVKTALTNAGFVINKRKGFGPKRHMICAHYEKAYSSSKKNRHTPWHINYPVTKEERTALIVGGGLAGCFIANSLAKRGWEVTILEEKEKVGCGGSANQQAVLFPKLSIYKSPFTQFMLYSFLYANDVYKELLKHYNLGELKGSLLLAHNEREKANQQSLIHWLELYPELGQLVDEKQSSELSGISLPCGGLFIPSSGWINSPELCDILIDNKRISLITGNRVQSINYNQKNWVVNDIDASVLILANGQQVNYFHETNHLPVKAIRGQMTTIQSTQESTKLKIPLCAEGHVLPALNNSHRVGASYDIGTSEPELNALDDQLNLDRLKRIAPDIIWSQNVLDHWAGIRAASPDYLPIVGPLPNALEFKEIYSELKSNSKRWIAEAAPCYPNLYVCAAFGSRGLTTIPLATEWLAGLINREISILPRKLIQAISPARFLRKKIIQGP.

The tRNA (mnm(5)s(2)U34)-methyltransferase stretch occupies residues 1-253 (MSSPFVPIIT…KRHMICAHYE (253 aa)). Residues 283 to 666 (VGGGLAGCFI…FLRKKIIQGP (384 aa)) form an FAD-dependent cmnm(5)s(2)U34 oxidoreductase region.

This sequence in the N-terminal section; belongs to the methyltransferase superfamily. tRNA (mnm(5)s(2)U34)-methyltransferase family. The protein in the C-terminal section; belongs to the DAO family. FAD serves as cofactor.

Its subcellular location is the cytoplasm. It carries out the reaction 5-aminomethyl-2-thiouridine(34) in tRNA + S-adenosyl-L-methionine = 5-methylaminomethyl-2-thiouridine(34) in tRNA + S-adenosyl-L-homocysteine + H(+). Functionally, catalyzes the last two steps in the biosynthesis of 5-methylaminomethyl-2-thiouridine (mnm(5)s(2)U) at the wobble position (U34) in tRNA. Catalyzes the FAD-dependent demodification of cmnm(5)s(2)U34 to nm(5)s(2)U34, followed by the transfer of a methyl group from S-adenosyl-L-methionine to nm(5)s(2)U34, to form mnm(5)s(2)U34. This chain is tRNA 5-methylaminomethyl-2-thiouridine biosynthesis bifunctional protein MnmC, found in Legionella pneumophila (strain Lens).